The following is a 396-amino-acid chain: N-terminal EF-hand calcium-binding protein 3 (396 aa).

Over residues 14 to 34 (PPAPQPQPQTPRHPQLAPDPG) the composition is skewed to pro residues. The tract at residues 14–36 (PPAPQPQPQTPRHPQLAPDPGPA) is disordered. The EF-hand domain occupies 36–71 (AGHTLFQDVFRRADKNDDGKLSFEEFQNYFADGVLS). 5 residues coordinate Ca(2+): D49, N51, D53, K55, and E60. The segment at 181 to 190 (VEAQSRLCGS) is required for interaction with APBA3. Positions 197-220 (ALRSVSRSSTWSPGSSDTGRSSEA) are disordered. Residues 206–217 (TWSPGSSDTGRS) are compositionally biased toward polar residues. The ABM domain occupies 296 to 385 (LMAQRQVQVA…RAPDTLTTVF (90 aa)).

Interacts with the N-terminal domain of APBA2. Interacts with NEK2. Interacts with APBA3; APBA3 seems to mediate the interaction between NECAB3 and HIF1AN. Phosphorylated by NEK2. Strongly expressed in heart and skeletal muscle, moderately in brain and pancreas.

Its subcellular location is the golgi apparatus. In terms of biological role, inhibits the interaction of APBA2 with amyloid-beta precursor protein (APP), and hence allows formation of amyloid-beta. May enhance the activity of HIF1A and thus promote glycolysis under normoxic conditions; the function requires its ABM domain and may implicate the stabilization of the interaction between HIF1AN and APBA3. This is N-terminal EF-hand calcium-binding protein 3 (NECAB3) from Homo sapiens (Human).